An 89-amino-acid polypeptide reads, in one-letter code: Putative defensin-like protein 40 (89 aa).

A signal peptide spans M1–A26. 4 disulfides stabilise this stretch: C33-C88, C46-C69, C55-C81, and C59-C83.

Belongs to the DEFL family.

It is found in the secreted. The polypeptide is Putative defensin-like protein 40 (Arabidopsis thaliana (Mouse-ear cress)).